The chain runs to 361 residues: dTDP-glucose 4,6-dehydratase (361 aa).

NAD(+)-binding positions include 11-12 (FI), 32-35 (DKLT), 58-59 (DI), 80-84 (LAAES), and Thr99. A substrate-binding site is contributed by Ser84. Thr133 contributes to the substrate binding site. The Proton donor role is filled by Asp134. Residues Glu135 and Tyr167 each act as proton acceptor in the active site. 167-171 (YSASK) lines the NAD(+) pocket. Asn196 is a binding site for substrate. An NAD(+)-binding site is contributed by Asn197. Residues 206-207 (KL), 222-224 (PIY), Arg231, Asn266, and 296-300 (DRPGH) each bind substrate.

This sequence belongs to the NAD(P)-dependent epimerase/dehydratase family. dTDP-glucose dehydratase subfamily. In terms of assembly, homodimer. The cofactor is NAD(+).

The enzyme catalyses dTDP-alpha-D-glucose = dTDP-4-dehydro-6-deoxy-alpha-D-glucose + H2O. It functions in the pathway carbohydrate biosynthesis; dTDP-L-rhamnose biosynthesis. It participates in bacterial outer membrane biogenesis; LPS O-antigen biosynthesis. In terms of biological role, catalyzes the dehydration of dTDP-D-glucose to form dTDP-6-deoxy-D-xylo-4-hexulose via a three-step process involving oxidation, dehydration and reduction. The sequence is that of dTDP-glucose 4,6-dehydratase (rfbB) from Escherichia coli.